The sequence spans 79 residues: Large ribosomal subunit protein bL28 (79 aa).

The protein belongs to the bacterial ribosomal protein bL28 family.

This chain is Large ribosomal subunit protein bL28, found in Blochmanniella floridana.